A 271-amino-acid chain; its full sequence is Peroxisomal biogenesis factor 2 (271 aa).

Over 1–2 (MS) the chain is Peroxisomal matrix. Residues 3–29 (RVAQLDSIALDKELYGQFWSEFNAAFN) traverse the membrane as a helical segment. The Cytoplasmic segment spans residues 30-33 (TSEH). A helical transmembrane segment spans residues 34–60 (KEEWELALNTVVFMCATRFLPHYGSSC). The Peroxisomal matrix segment spans residues 61–77 (TYGSALSGVVFQCRKRT). The helical transmembrane segment at 78–97 (LYVVTVLAGYVWKKITHIIF) threads the bilayer. The Cytoplasmic segment spans residues 98 to 101 (NGPH). A helical transmembrane segment spans residues 102 to 133 (CGNQMMWLKLYKWVNLLYHGCDVTNFLRFLAA). Residues 134 to 175 (EGPNARAFLSPLYRAFNVHSTRLIRDGSAIASEFYSNSVFAG) are Peroxisomal matrix-facing. Residues 176-197 (LEYQNRQLLWNALLELFSNTLL) form a helical membrane-spanning segment. Topologically, residues 198–271 (TKRGLLTFVK…SGRLTASPVY (74 aa)) are cytoplasmic. Zn(2+) is bound by residues C222, C225, C237, C238, C243, C246, C256, and C259. The RING-type zinc-finger motif lies at 222–259 (CPRCGGFPTNPYQIACCRANYCYVCVVKALEWSMCDAC).

It belongs to the pex2/pex10/pex12 family. In terms of assembly, component of the PEX2-PEX10-PEX12 retrotranslocation channel, composed of PEX2, PEX10 and PEX12.

It localises to the peroxisome membrane. It carries out the reaction [E2 ubiquitin-conjugating enzyme]-S-ubiquitinyl-L-cysteine + [acceptor protein]-L-cysteine = [E2 ubiquitin-conjugating enzyme]-L-cysteine + [acceptor protein]-S-ubiquitinyl-L-cysteine.. It participates in protein modification; protein ubiquitination. Its function is as follows. E3 ubiquitin-protein ligase component of a retrotranslocation channel required for peroxisome organization by mediating export of the PEX5 receptor from peroxisomes to the cytosol, thereby promoting PEX5 recycling. The retrotranslocation channel is composed of PEX2, PEX10 and PEX12; each subunit contributing transmembrane segments that coassemble into an open channel that specifically allows the passage of PEX5 through the peroxisomal membrane. PEX2 also regulates peroxisome organization by acting as a E3 ubiquitin-protein ligase. PEX2 ubiquitinates PEX5 during its passage through the retrotranslocation channel: catalyzes monoubiquitination of PEX5 at 'Cys-6', a modification that acts as a signal for PEX5 extraction into the cytosol. In Saccharomyces cerevisiae (strain ATCC 204508 / S288c) (Baker's yeast), this protein is Peroxisomal biogenesis factor 2.